Reading from the N-terminus, the 435-residue chain is Virulence factor PIT1 (435 aa).

The next 5 membrane-spanning stretches (helical) occupy residues 33–53, 77–97, 111–131, 143–163, and 204–224; these read ETTT…SEVI, IFFI…ILVT, WAWT…CVIG, VASW…MWTN, and TFWF…ACCI. Asn330 carries N-linked (GlcNAc...) asparagine glycosylation. The segment covering 392–404 has biased composition (polar residues); that stretch reads SPQMPSKAQSQSI. The disordered stretch occupies residues 392–435; sequence SPQMPSKAQSQSIPYKREVEVTVDMSPVPPPPGPSPAPLPAPYM. The segment covering 418–435 has biased composition (pro residues); that stretch reads PVPPPPGPSPAPLPAPYM.

In terms of processing, O-mannosylated by PMT4. Is also N-glycosylated.

It is found in the cell membrane. In terms of biological role, plasma membrane virulence factor required for spreading and inducing tumors in infected leaves. The protein is Virulence factor PIT1 of Mycosarcoma maydis (Corn smut fungus).